We begin with the raw amino-acid sequence, 208 residues long: Cytochrome c biogenesis ATP-binding export protein CcmA (208 aa).

The ABC transporter domain maps to Leu3–Lys206. Gly35–Ser42 provides a ligand contact to ATP.

The protein belongs to the ABC transporter superfamily. CcmA exporter (TC 3.A.1.107) family. In terms of assembly, the complex is composed of two ATP-binding proteins (CcmA) and two transmembrane proteins (CcmB).

Its subcellular location is the cell inner membrane. The catalysed reaction is heme b(in) + ATP + H2O = heme b(out) + ADP + phosphate + H(+). In terms of biological role, part of the ABC transporter complex CcmAB involved in the biogenesis of c-type cytochromes; once thought to export heme, this seems not to be the case, but its exact role is uncertain. Responsible for energy coupling to the transport system. This chain is Cytochrome c biogenesis ATP-binding export protein CcmA, found in Bartonella henselae (strain ATCC 49882 / DSM 28221 / CCUG 30454 / Houston 1) (Rochalimaea henselae).